The sequence spans 298 residues: N-acetylmuramic acid 6-phosphate etherase (298 aa).

The 164-residue stretch at A55–K218 folds into the SIS domain. Catalysis depends on E83, which acts as the Proton donor. E114 is a catalytic residue.

The protein belongs to the GCKR-like family. MurNAc-6-P etherase subfamily. As to quaternary structure, homodimer.

The catalysed reaction is N-acetyl-D-muramate 6-phosphate + H2O = N-acetyl-D-glucosamine 6-phosphate + (R)-lactate. The protein operates within amino-sugar metabolism; N-acetylmuramate degradation. Its function is as follows. Specifically catalyzes the cleavage of the D-lactyl ether substituent of MurNAc 6-phosphate, producing GlcNAc 6-phosphate and D-lactate. This chain is N-acetylmuramic acid 6-phosphate etherase, found in Lactobacillus acidophilus (strain ATCC 700396 / NCK56 / N2 / NCFM).